The following is a 539-amino-acid chain: Probable quinate permease (539 aa).

Topologically, residues 1–22 are cytoplasmic; it reads MSILSMVEDRPTPKEVYNWRIY. Residues 23-43 form a helical membrane-spanning segment; that stretch reads LLAAVASFTSCMIGYDSAFIG. Topologically, residues 44-74 are extracellular; sequence TTISLDSFKNEFHWDSMSTAKQNLVSANIVS. A helical transmembrane segment spans residues 75–95; sequence CYQAGAFFGAFFAYPIGHFWG. Over 96–97 the chain is Cytoplasmic; it reads RK. Residues 98-118 form a helical membrane-spanning segment; sequence WGLMLSALVFTLGAGLMLGAN. Topologically, residues 119-130 are extracellular; the sequence is GDRGLGLIYGGR. The chain crosses the membrane as a helical span at residues 131–151; that stretch reads VLAGLGVGAGSNFTPIYISEL. Over 152–159 the chain is Cytoplasmic; the sequence is APPAIRGR. Residues 160 to 180 traverse the membrane as a helical segment; it reads LVGVYELGWQVGGLVGFWINY. The Extracellular segment spans residues 181 to 193; that stretch reads GVEQTMAPSHKQW. The chain crosses the membrane as a helical span at residues 194 to 214; the sequence is LIPFAVQLIPAGLLIIGILFV. Topologically, residues 215 to 285 are cytoplasmic; that stretch reads KESPRWLFLR…AWTNKRILYR (71 aa). The chain crosses the membrane as a helical span at residues 286–306; it reads LFLGSMLFFWQNGSGINAINY. The Extracellular portion of the chain corresponds to 307–325; it reads YSPTVFKSIGLKGNSSSLL. A helical membrane pass occupies residues 326–346; the sequence is TTGIFGVVKTVVTIVWLLYLI. Residues 347–352 lie on the Cytoplasmic side of the membrane; the sequence is DHVGRR. Residues 353–373 traverse the membrane as a helical segment; sequence LLLLIGAAGGSICMWIVGAYI. Residues 374–387 are Extracellular-facing; that stretch reads KVVDPTHNQSDHLN. A helical membrane pass occupies residues 388-408; that stretch reads GGGVAAIFFFYLWTAFYTPSW. At 409-456 the chain is on the cytoplasmic side; the sequence is NGTPWVINSEMFDPNIRSLAQACAAGSNWLWNFLISRFTPQMFAKMDY. A helical membrane pass occupies residues 457-477; that stretch reads GVYFFFASLMLLSIPFVFFLV. The Extracellular portion of the chain corresponds to 478 to 539; it reads PETKGIPLEN…EQVEDTDRKE (62 aa).

Belongs to the major facilitator superfamily. Sugar transporter (TC 2.A.1.1) family. As to quaternary structure, interacts with creB. Ubiquitinated. Deubiquitinated by creB, probably to control its activity or amount.

The protein localises to the cell membrane. Integral membrane transporter that imports quinic acid to be catabolized as a carbon source. The polypeptide is Probable quinate permease (qutD) (Aspergillus niger (strain ATCC MYA-4892 / CBS 513.88 / FGSC A1513)).